A 918-amino-acid polypeptide reads, in one-letter code: MSALRIWLMQALLIFLTTESIGQLVEPCGYIYPEFPVVQRGSNFTATCVLKEKCLQVYSVNATYIVWKTNHVAVPKEQVTVINRTASSVTFTDVVFQNVQLTCNILSFGQIEQNVYGITILSGYPPDIPTNLSCIVNEGKNMLCQLDPGRETYLETNYTLKSEWATEKFPDCRTKHGTSSCMMGYTPIYFVNIEVWVEAENALGNVSSEPINFDPVDKVKPSPPHNLSVTNSEELSSILKLAWVNSGLDSILRLKSDIQYRTKDASTWIQVPLEDTVSPRTSFTVQDLKPFTEYVFRIRSIKENGKGYWSDWSEEASGTTYEDRPSKAPSFWYKVNANHPQEYRSARLIWKTLPLSEANGKILDYEVVLTQSKSVSQTYTVNGTELIVNLTNNRYVASLAARNVVGKSPATVLTIPGSHFKASHPVVDLKAFPKDNLLWVEWTPPSKPVNKYILEWCVLSENSPCIPDWQQEDGTVNRTHLRGSLLESKCYLITVTPVFPGGPGSPESMKAYLKQAAPSKGPTVRTKKVGKNEAVLEWDHLPVDVQNGFIRNYSISYRTSVGKEMVVRVDSSHTEYTLSSLSSDTLYMVHMAAYTEEGGKDGPEFTFTTLKFAQGEIEAIVVPVCLAFLLTTLLGVLFCFNKRDLIKKHIWPNVPDPSKSHIAQWSPHTPPRHNFNSKDQMYSDANFTDVSVVEIEANNKKPCPDDLKSLDLFKKEKISTEGHSSGIGGSSCMSSSRPSISSSEENESAQSTASTVQYSTVVHSGYRHQVPSVQVFSRSESTQPLLDSEERPEDLQLVDSVDSGDEILPRQQYFKQSCSQPGASPDVSHFGRSSQVPSGSEEDFVRLKQQQVSDHISEPYGSEQRRLFQEGSVADALGTGTDGQIERFESVGMETAMDEDISKSYLPQTVRQGGYMPQ.

The N-terminal stretch at methionine 1 to glycine 22 is a signal peptide. Residues glutamine 23–glutamate 618 lie on the Extracellular side of the membrane. One can recognise an Ig-like C2-type domain in the interval glutamate 26–isoleucine 120. 2 disulfides stabilise this stretch: cysteine 28-cysteine 54 and cysteine 48-cysteine 103. N-linked (GlcNAc...) asparagine glycans are attached at residues asparagine 43, asparagine 61, asparagine 83, and asparagine 131. Fibronectin type-III domains follow at residues proline 125 to proline 215, proline 223 to aspartate 323, alanine 328 to serine 418, alanine 422 to alanine 516, and proline 518 to phenylalanine 612. The cysteines at positions 134 and 144 are disulfide-linked. Residue asparagine 157 is glycosylated (N-linked (GlcNAc...) asparagine). A disulfide bridge links cysteine 172 with cysteine 181. N-linked (GlcNAc...) asparagine glycosylation is found at asparagine 205 and asparagine 226. A WSXWS motif motif is present at residues tryptophan 309–serine 313. N-linked (GlcNAc...) asparagine glycans are attached at residues asparagine 382 and asparagine 389. Cysteine 457 and cysteine 465 are disulfide-bonded. N-linked (GlcNAc...) asparagine glycans are attached at residues asparagine 477 and asparagine 552. The chain crosses the membrane as a helical span at residues alanine 619–phenylalanine 640. Residues asparagine 641–glutamine 918 lie on the Cytoplasmic side of the membrane. Residues isoleucine 650 to serine 658 carry the Box 1 motif motif. Disordered regions lie at residues lysine 659–aspartate 679, threonine 720–serine 754, valine 773–leucine 795, and serine 817–glutamate 842. Phosphoserine is present on residues serine 660 and serine 666. Positions serine 730–serine 751 are enriched in low complexity. The span at valine 773–leucine 785 shows a compositional bias: polar residues. Serine 781, serine 788, serine 828, and serine 838 each carry phosphoserine.

Belongs to the type I cytokine receptor family. Type 2 subfamily. In terms of assembly, component of a hexamer of two molecules each of IL6, IL6R and IL6ST; associates with the complex IL6:IL6R but does not interact with IL6. Forms heterodimers composed of LIFR and IL6ST (type I OSM receptor) which are activated by LIF and OSM. Also forms heterodimers composed of OSMR and IL6ST (type II receptor) which are activated by OSM but not by LIF. Interacts with HCK. Interacts with INPP5D/SHIP1. Interacts with SRC and YES. Interacts with ARMH4; this interaction prevents IL6ST protein homodimerization and bridges ARMH4 with IL6R and STAT3 and therefore inhibits phosphorylation of STAT3 at 'Tyr-705'. In terms of processing, phosphorylation of Ser-781 down-regulates cell surface expression. Heavily N-glycosylated. Glycosylation is required for protein stability and localization in plasma membrane but not for ligand binding. As to expression, found in hepatocytes, astrocytes, fibroblasts and endothelial cells.

It is found in the cell membrane. In terms of biological role, signal-transducing molecule. The receptor systems for IL6, LIF, OSM, CNTF, IL11, CTF1 and BSF3 can utilize IL6ST for initiating signal transmission. Binding of IL6 to IL6R induces IL6ST homodimerization and formation of a high-affinity receptor complex, which activates the intracellular JAK-MAPK and JAK-STAT3 signaling pathways. That causes phosphorylation of IL6ST tyrosine residues which in turn activates STAT3. In parallel, the IL6 signaling pathway induces the expression of two cytokine receptor signaling inhibitors, SOCS1 and SOCS3, which inhibit JAK and terminate the activity of the IL6 signaling pathway as a negative feedback loop. Also activates the yes-associated protein 1 (YAP) and NOTCH pathways to control inflammation-induced epithelial regeneration, independently of STAT3. Mediates signals which regulate immune response, hematopoiesis, pain control and bone metabolism. Has a role in embryonic development. Essential for survival of motor and sensory neurons and for differentiation of astrocytes. Required for expression of TRPA1 in nociceptive neurons. Required for the maintenance of PTH1R expression in the osteoblast lineage and for the stimulation of PTH-induced osteoblast differentiation. Required for normal trabecular bone mass and cortical bone composition. The sequence is that of Interleukin-6 receptor subunit beta from Rattus norvegicus (Rat).